We begin with the raw amino-acid sequence, 203 residues long: Ras-related protein Rab-13 (203 aa).

Residues S17, G18, G20, K21, T22, C23, and T40 each contribute to the GTP site. T22 contacts Mg(2+). Residues 31–45 (DSFNNTYISTIGIDF) carry the Switch 1 motif. T40 is a binding site for Mg(2+). Glycyl lysine isopeptide (Lys-Gly) (interchain with G-Cter in ubiquitin) cross-links involve residues K46 and K58. D63 lines the Mg(2+) pocket. A Switch 2 motif is present at residues 63-80 (DTAGQERFKTITTAYYRG). Positions 66, 121, 122, 124, 152, and 153 each coordinate GTP. The segment at 173-203 (SGGRRSGNSHKAPGTDLKPCDKKNTSKCSLG) is disordered. At S178 the chain carries Phosphoserine. C200 carries the post-translational modification Cysteine methyl ester. C200 is lipidated: S-geranylgeranyl cysteine. Residues 201–203 (SLG) constitute a propeptide, removed in mature form.

It belongs to the small GTPase superfamily. Rab family. Interacts (GTP-bound form) with MICALL2; competes with RAB8A and is involved in tight junctions assembly. Interacts (GTP-bound form) with MICALL1. Interacts (GTP-bound form) with MICAL1, MICAL3, MICALCL, EHBP1 and EHBP1L1; ternary complexes of RAB8A, RAB13 and either MICAL1 or EHBP1L1 are possible. Interacts with PRKACA; downstream effector of RAB13 involved in tight junction assembly. Interacts with GRB2; may recruit RAB13 to the leading edge of migrating endothelial cells where it can activate RHOA. Interacts (isoprenylated form) with PDE6D; dissociates RAB13 from membranes. Interacts with BICDL2/BICDR2. Interacts with LEPROT and LEPROTL1. Requires Mg(2+) as cofactor. In terms of processing, ubiquitinated via 'Lys-11'-linked ubiquitination on Lys-46 and Lys-58; impairing the recruitment of guanosine diphosphate (GDP) dissociation inhibitor 1/GDI1.

The protein resides in the cell membrane. It localises to the cytoplasmic vesicle membrane. Its subcellular location is the cell junction. The protein localises to the tight junction. It is found in the golgi apparatus. The protein resides in the trans-Golgi network membrane. It localises to the recycling endosome membrane. Its subcellular location is the cell projection. The protein localises to the lamellipodium. The enzyme catalyses GTP + H2O = GDP + phosphate + H(+). Its activity is regulated as follows. Regulated by guanine nucleotide exchange factors (GEFs) including DENND1C, which promote the exchange of bound GDP for free GTP. Regulated by GTPase activating proteins (GAPs) which increase the GTP hydrolysis activity. Inhibited by GDP dissociation inhibitors (GDIs). Activated in response to insulin. Its function is as follows. The small GTPases Rab are key regulators of intracellular membrane trafficking, from the formation of transport vesicles to their fusion with membranes. Rabs cycle between an inactive GDP-bound form and an active GTP-bound form that is able to recruit to membranes different sets of downstream effectors directly responsible for vesicle formation, movement, tethering and fusion. RAB13 is involved in endocytic recycling and regulates the transport to the plasma membrane of transmembrane proteins like the tight junction protein OCLN/occludin. Thereby, it regulates the assembly and the activity of tight junctions. Moreover, it may also regulate tight junction assembly by activating the PKA signaling pathway and by reorganizing the actin cytoskeleton through the activation of the downstream effectors PRKACA and MICALL2 respectively. Through its role in tight junction assembly, may play a role in the establishment of Sertoli cell barrier. Plays also a role in angiogenesis through regulation of endothelial cells chemotaxis. Also involved in neurite outgrowth. Has also been proposed to play a role in post-Golgi membrane trafficking from the TGN to the recycling endosome. Finally, it has been involved in insulin-induced transport to the plasma membrane of the glucose transporter GLUT4 and therefore may play a role in glucose homeostasis. The sequence is that of Ras-related protein Rab-13 (RAB13) from Canis lupus familiaris (Dog).